The chain runs to 498 residues: DEAD-box ATP-dependent RNA helicase 6 (498 aa).

Positions 1–109 are disordered; that stretch reads MDPRARYPPG…WKAQLKLPPQ (109 aa). Over residues 33–49 the composition is skewed to basic residues; the sequence is QHQHQHQQPPHPHHHQY. Composition is skewed to low complexity over residues 50–61 and 75–86; these read VQRQPQPQQTPH and AAEAAGASEQKA. The Q motif motif lies at 124-152; it reads NEFEDYFLKRELLMGIYEKGFERPSPIQE. In terms of domain architecture, Helicase ATP-binding spans 155–325; the sequence is IPIALTGSDI…DKYLPKPYVI (171 aa). Position 168–175 (168–175) interacts with ATP; that stretch reads AKNGTGKT. Positions 273 to 276 match the DEAD box motif; the sequence is DEAD. A Helicase C-terminal domain is found at 335–495; that stretch reads GITQFYAFVE…PIPPQIDRAI (161 aa).

It belongs to the DEAD box helicase family. DDX6/DHH1 subfamily.

Its subcellular location is the cytoplasm. It localises to the P-body. The catalysed reaction is ATP + H2O = ADP + phosphate + H(+). Functionally, ATP-dependent RNA helicase involved in mRNA turnover, and more specifically in mRNA decapping. This Oryza sativa subsp. japonica (Rice) protein is DEAD-box ATP-dependent RNA helicase 6.